The sequence spans 455 residues: Ribulose bisphosphate carboxylase large chain (455 aa).

An N6,N6,N6-trimethyllysine modification is found at lysine 5. Substrate is bound by residues asparagine 114 and threonine 164. Lysine 166 acts as the Proton acceptor in catalysis. Lysine 168 serves as a coordination point for substrate. Lysine 192, aspartate 194, and glutamate 195 together coordinate Mg(2+). Lysine 192 bears the N6-carboxylysine mark. Histidine 285 functions as the Proton acceptor in the catalytic mechanism. Substrate contacts are provided by arginine 286, histidine 318, and serine 370.

It belongs to the RuBisCO large chain family. Type I subfamily. Heterohexadecamer of 8 large chains and 8 small chains; disulfide-linked. The disulfide link is formed within the large subunit homodimers. The cofactor is Mg(2+). The disulfide bond which can form in the large chain dimeric partners within the hexadecamer appears to be associated with oxidative stress and protein turnover.

It is found in the plastid. Its subcellular location is the chloroplast. The catalysed reaction is 2 (2R)-3-phosphoglycerate + 2 H(+) = D-ribulose 1,5-bisphosphate + CO2 + H2O. The enzyme catalyses D-ribulose 1,5-bisphosphate + O2 = 2-phosphoglycolate + (2R)-3-phosphoglycerate + 2 H(+). In terms of biological role, ruBisCO catalyzes two reactions: the carboxylation of D-ribulose 1,5-bisphosphate, the primary event in carbon dioxide fixation, as well as the oxidative fragmentation of the pentose substrate in the photorespiration process. Both reactions occur simultaneously and in competition at the same active site. The sequence is that of Ribulose bisphosphate carboxylase large chain from Lupinus digitatus (Lupine).